The following is a 590-amino-acid chain: DNA primase (590 aa).

A CHC2-type zinc finger spans residues 37-61; that stretch reads CPFHKEKTPSFSVSPTKQFYHCFSC. Residues 255–337 form the Toprim domain; sequence GRILVVEGYM…DKSLHFLFLP (83 aa). Mg(2+) is bound by residues glutamate 261, aspartate 305, and aspartate 307.

This sequence belongs to the DnaG primase family. In terms of assembly, monomer. Interacts with DnaB. It depends on Zn(2+) as a cofactor. Mg(2+) is required as a cofactor.

The catalysed reaction is ssDNA + n NTP = ssDNA/pppN(pN)n-1 hybrid + (n-1) diphosphate.. Functionally, RNA polymerase that catalyzes the synthesis of short RNA molecules used as primers for DNA polymerase during DNA replication. This is DNA primase from Neisseria meningitidis serogroup B (strain ATCC BAA-335 / MC58).